We begin with the raw amino-acid sequence, 171 residues long: Crossover junction endodeoxyribonuclease RuvC (171 aa).

Residues aspartate 7, glutamate 66, and aspartate 138 contribute to the active site. Residues aspartate 7, glutamate 66, and aspartate 138 each coordinate Mg(2+).

The protein belongs to the RuvC family. As to quaternary structure, homodimer which binds Holliday junction (HJ) DNA. The HJ becomes 2-fold symmetrical on binding to RuvC with unstacked arms; it has a different conformation from HJ DNA in complex with RuvA. In the full resolvosome a probable DNA-RuvA(4)-RuvB(12)-RuvC(2) complex forms which resolves the HJ. It depends on Mg(2+) as a cofactor.

The protein localises to the cytoplasm. The enzyme catalyses Endonucleolytic cleavage at a junction such as a reciprocal single-stranded crossover between two homologous DNA duplexes (Holliday junction).. Functionally, the RuvA-RuvB-RuvC complex processes Holliday junction (HJ) DNA during genetic recombination and DNA repair. Endonuclease that resolves HJ intermediates. Cleaves cruciform DNA by making single-stranded nicks across the HJ at symmetrical positions within the homologous arms, yielding a 5'-phosphate and a 3'-hydroxyl group; requires a central core of homology in the junction. The consensus cleavage sequence is 5'-(A/T)TT(C/G)-3'. Cleavage occurs on the 3'-side of the TT dinucleotide at the point of strand exchange. HJ branch migration catalyzed by RuvA-RuvB allows RuvC to scan DNA until it finds its consensus sequence, where it cleaves and resolves the cruciform DNA. In Thiobacillus denitrificans (strain ATCC 25259 / T1), this protein is Crossover junction endodeoxyribonuclease RuvC.